The following is a 79-amino-acid chain: Small ribosomal subunit protein bS16 (79 aa).

It belongs to the bacterial ribosomal protein bS16 family.

This Desulfovibrio desulfuricans (strain ATCC 27774 / DSM 6949 / MB) protein is Small ribosomal subunit protein bS16.